The primary structure comprises 283 residues: Ribosomal RNA small subunit methyltransferase I (283 aa).

This sequence belongs to the methyltransferase superfamily. RsmI family.

It is found in the cytoplasm. The enzyme catalyses cytidine(1402) in 16S rRNA + S-adenosyl-L-methionine = 2'-O-methylcytidine(1402) in 16S rRNA + S-adenosyl-L-homocysteine + H(+). In terms of biological role, catalyzes the 2'-O-methylation of the ribose of cytidine 1402 (C1402) in 16S rRNA. In Haemophilus influenzae (strain ATCC 51907 / DSM 11121 / KW20 / Rd), this protein is Ribosomal RNA small subunit methyltransferase I.